A 606-amino-acid polypeptide reads, in one-letter code: Aspartate--tRNA(Asp/Asn) ligase (606 aa).

Glutamate 177 contributes to the L-aspartate binding site. The tract at residues 201–204 is aspartate; it reads QLFK. Arginine 223 is a binding site for L-aspartate. ATP is bound by residues 223–225 and glutamine 232; that span reads RDE. Histidine 461 contributes to the L-aspartate binding site. Glutamate 499 provides a ligand contact to ATP. Arginine 506 contacts L-aspartate. 551 to 554 provides a ligand contact to ATP; the sequence is GLDR.

Belongs to the class-II aminoacyl-tRNA synthetase family. Type 1 subfamily. Homodimer.

It localises to the cytoplasm. It carries out the reaction tRNA(Asx) + L-aspartate + ATP = L-aspartyl-tRNA(Asx) + AMP + diphosphate. In terms of biological role, aspartyl-tRNA synthetase with relaxed tRNA specificity since it is able to aspartylate not only its cognate tRNA(Asp) but also tRNA(Asn). Reaction proceeds in two steps: L-aspartate is first activated by ATP to form Asp-AMP and then transferred to the acceptor end of tRNA(Asp/Asn). The polypeptide is Aspartate--tRNA(Asp/Asn) ligase (Prochlorococcus marinus (strain NATL2A)).